The following is a 303-amino-acid chain: Acidic endochitinase WIN6.2B (303 aa).

Residues 1–21 form the signal peptide; sequence MSVWAFAFFSLFLSLSVRGSA. The region spanning 22–62 is the Chitin-binding type-1 domain; the sequence is EQCGQQAGDALCPGGLCCSSYGWCGTTADYCGDGCQSQCDG. 4 disulfides stabilise this stretch: Cys24/Cys39, Cys33/Cys45, Cys38/Cys52, and Cys56/Cys60. Residues 82 to 303 are chitinase; the sequence is DGYLSDIIPE…YGLLGLKDTM (222 aa). Residue Glu150 is the Proton donor of the active site. A disulfide bridge links Cys253 with Cys286.

This sequence belongs to the glycosyl hydrolase 19 family. Chitinase class I subfamily.

The enzyme catalyses Random endo-hydrolysis of N-acetyl-beta-D-glucosaminide (1-&gt;4)-beta-linkages in chitin and chitodextrins.. Functionally, defense against chitin-containing fungal pathogens. The protein is Acidic endochitinase WIN6.2B of Populus trichocarpa (Western balsam poplar).